We begin with the raw amino-acid sequence, 289 residues long: Spore coat polysaccharide biosynthesis protein SpsD (289 aa).

Positions 137 to 289 constitute an N-acetyltransferase domain; it reads FELGPPEPGD…YHIWPGKEAK (153 aa).

It functions in the pathway spore coat biogenesis; spore coat polysaccharide biosynthesis. This Bacillus subtilis (strain 168) protein is Spore coat polysaccharide biosynthesis protein SpsD (spsD).